A 348-amino-acid chain; its full sequence is NADH-quinone oxidoreductase subunit H (348 aa).

8 helical membrane passes run 7–27 (IWLL…VVLL), 82–102 (GVFL…WAVI), 115–135 (VGLL…IMGG), 161–181 (IGFV…TTIV), 199–219 (FLDW…ISAL), 251–271 (LFFL…TILF), 287–307 (VPGI…FAMV), and 322–342 (LGWK…ATFL).

Belongs to the complex I subunit 1 family. In terms of assembly, NDH-1 is composed of 14 different subunits. Subunits NuoA, H, J, K, L, M, N constitute the membrane sector of the complex.

The protein localises to the cell inner membrane. It catalyses the reaction a quinone + NADH + 5 H(+)(in) = a quinol + NAD(+) + 4 H(+)(out). Functionally, NDH-1 shuttles electrons from NADH, via FMN and iron-sulfur (Fe-S) centers, to quinones in the respiratory chain. The immediate electron acceptor for the enzyme in this species is believed to be ubiquinone. Couples the redox reaction to proton translocation (for every two electrons transferred, four hydrogen ions are translocated across the cytoplasmic membrane), and thus conserves the redox energy in a proton gradient. This subunit may bind ubiquinone. The polypeptide is NADH-quinone oxidoreductase subunit H (Bartonella quintana (strain Toulouse) (Rochalimaea quintana)).